The sequence spans 425 residues: Adenylosuccinate synthetase (425 aa).

GTP contacts are provided by residues 12-18 (GDEGKAK) and 40-42 (GHT). The active-site Proton acceptor is Asp-13. The Mg(2+) site is built by Asp-13 and Gly-40. Residues 13–16 (DEGK), 38–41 (NAGH), Thr-130, Arg-144, Gln-224, Thr-239, and Arg-303 contribute to the IMP site. His-41 serves as the catalytic Proton donor. Residue 299–305 (ATTGRPR) participates in substrate binding. GTP is bound by residues Arg-305, 331–333 (KID), and 411–413 (STG).

The protein belongs to the adenylosuccinate synthetase family. In terms of assembly, homodimer. Mg(2+) is required as a cofactor.

It localises to the cytoplasm. It carries out the reaction IMP + L-aspartate + GTP = N(6)-(1,2-dicarboxyethyl)-AMP + GDP + phosphate + 2 H(+). Its pathway is purine metabolism; AMP biosynthesis via de novo pathway; AMP from IMP: step 1/2. Functionally, plays an important role in the de novo pathway of purine nucleotide biosynthesis. Catalyzes the first committed step in the biosynthesis of AMP from IMP. The polypeptide is Adenylosuccinate synthetase (Leptospira interrogans serogroup Icterohaemorrhagiae serovar copenhageni (strain Fiocruz L1-130)).